The sequence spans 427 residues: Glutamate-1-semialdehyde 2,1-aminomutase (427 aa).

Residue Lys-265 is modified to N6-(pyridoxal phosphate)lysine.

It belongs to the class-III pyridoxal-phosphate-dependent aminotransferase family. HemL subfamily. As to quaternary structure, homodimer. Pyridoxal 5'-phosphate is required as a cofactor.

It localises to the cytoplasm. It catalyses the reaction (S)-4-amino-5-oxopentanoate = 5-aminolevulinate. It functions in the pathway porphyrin-containing compound metabolism; protoporphyrin-IX biosynthesis; 5-aminolevulinate from L-glutamyl-tRNA(Glu): step 2/2. The chain is Glutamate-1-semialdehyde 2,1-aminomutase from Burkholderia orbicola (strain MC0-3).